We begin with the raw amino-acid sequence, 89 residues long: Small ribosomal subunit protein uS15 (89 aa).

Belongs to the universal ribosomal protein uS15 family. Part of the 30S ribosomal subunit. Forms a bridge to the 50S subunit in the 70S ribosome, contacting the 23S rRNA.

Its function is as follows. One of the primary rRNA binding proteins, it binds directly to 16S rRNA where it helps nucleate assembly of the platform of the 30S subunit by binding and bridging several RNA helices of the 16S rRNA. In terms of biological role, forms an intersubunit bridge (bridge B4) with the 23S rRNA of the 50S subunit in the ribosome. The chain is Small ribosomal subunit protein uS15 from Shewanella baltica (strain OS223).